The following is a 24-amino-acid chain: Heptapoietin A light chain (24 aa).

Heterodimer of a heavy and a light chain linked by disulfide bond(s).

HPTA is an acidic heparin-binding growth factor for hepatocytes. This chain is Heptapoietin A light chain, found in Oryctolagus cuniculus (Rabbit).